We begin with the raw amino-acid sequence, 83 residues long: Exodeoxyribonuclease 7 small subunit (83 aa).

The protein belongs to the XseB family. Heterooligomer composed of large and small subunits.

The protein localises to the cytoplasm. The enzyme catalyses Exonucleolytic cleavage in either 5'- to 3'- or 3'- to 5'-direction to yield nucleoside 5'-phosphates.. Bidirectionally degrades single-stranded DNA into large acid-insoluble oligonucleotides, which are then degraded further into small acid-soluble oligonucleotides. The sequence is that of Exodeoxyribonuclease 7 small subunit from Aeromonas salmonicida (strain A449).